Here is a 587-residue protein sequence, read N- to C-terminus: Aspartate--tRNA ligase (587 aa).

Residue E174 coordinates L-aspartate. An aspartate region spans residues Q198–K201. R220 provides a ligand contact to L-aspartate. ATP-binding positions include R220–E222 and Q229. H443 lines the L-aspartate pocket. E477 serves as a coordination point for ATP. An L-aspartate-binding site is contributed by R484. Residue G529–R532 participates in ATP binding.

It belongs to the class-II aminoacyl-tRNA synthetase family. Type 1 subfamily. Homodimer.

It is found in the cytoplasm. The enzyme catalyses tRNA(Asp) + L-aspartate + ATP = L-aspartyl-tRNA(Asp) + AMP + diphosphate. Its function is as follows. Catalyzes the attachment of L-aspartate to tRNA(Asp) in a two-step reaction: L-aspartate is first activated by ATP to form Asp-AMP and then transferred to the acceptor end of tRNA(Asp). This chain is Aspartate--tRNA ligase, found in Streptococcus pneumoniae (strain Taiwan19F-14).